Reading from the N-terminus, the 122-residue chain is Large ribosomal subunit protein uL14 (122 aa).

This sequence belongs to the universal ribosomal protein uL14 family. In terms of assembly, part of the 50S ribosomal subunit. Forms a cluster with proteins L3 and L19. In the 70S ribosome, L14 and L19 interact and together make contacts with the 16S rRNA in bridges B5 and B8.

Functionally, binds to 23S rRNA. Forms part of two intersubunit bridges in the 70S ribosome. The polypeptide is Large ribosomal subunit protein uL14 (Borrelia recurrentis (strain A1)).